The chain runs to 119 residues: MSRVKRGVTAHAKHKKVYKAAKGFYGRRKNTIRAAKPAVEKAQQYAFRDRKRKKRTFRALWIQRLNAAVRPFGLTYSRFIDGLAKSGITVDRKVLSDLAINEPASFQAIAEKAKAALAA.

The protein belongs to the bacterial ribosomal protein bL20 family.

Functionally, binds directly to 23S ribosomal RNA and is necessary for the in vitro assembly process of the 50S ribosomal subunit. It is not involved in the protein synthesizing functions of that subunit. The polypeptide is Large ribosomal subunit protein bL20 (Bradyrhizobium diazoefficiens (strain JCM 10833 / BCRC 13528 / IAM 13628 / NBRC 14792 / USDA 110)).